The sequence spans 538 residues: Chaperonin GroEL (538 aa).

ATP contacts are provided by residues 29–32 (TLGP), 86–90 (DGTTT), Gly-413, 477–479 (NAA), and Asp-493.

This sequence belongs to the chaperonin (HSP60) family. In terms of assembly, forms a cylinder of 14 subunits composed of two heptameric rings stacked back-to-back. Interacts with the co-chaperonin GroES.

It localises to the cytoplasm. The enzyme catalyses ATP + H2O + a folded polypeptide = ADP + phosphate + an unfolded polypeptide.. Functionally, together with its co-chaperonin GroES, plays an essential role in assisting protein folding. The GroEL-GroES system forms a nano-cage that allows encapsulation of the non-native substrate proteins and provides a physical environment optimized to promote and accelerate protein folding. In Scardovia inopinata (Bifidobacterium inopinatum), this protein is Chaperonin GroEL.